We begin with the raw amino-acid sequence, 1342 residues long: DNA-directed RNA polymerase subunit beta (1342 aa).

K1022 and K1200 each carry N6-acetyllysine.

This sequence belongs to the RNA polymerase beta chain family. As to quaternary structure, the RNAP catalytic core consists of 2 alpha, 1 beta, 1 beta' and 1 omega subunit. When a sigma factor is associated with the core the holoenzyme is formed, which can initiate transcription.

It carries out the reaction RNA(n) + a ribonucleoside 5'-triphosphate = RNA(n+1) + diphosphate. Functionally, DNA-dependent RNA polymerase catalyzes the transcription of DNA into RNA using the four ribonucleoside triphosphates as substrates. This Escherichia coli O6:K15:H31 (strain 536 / UPEC) protein is DNA-directed RNA polymerase subunit beta.